Consider the following 342-residue polypeptide: Ribosomal RNA small subunit methyltransferase C (342 aa).

It belongs to the methyltransferase superfamily. RsmC family. In terms of assembly, monomer.

Its subcellular location is the cytoplasm. The catalysed reaction is guanosine(1207) in 16S rRNA + S-adenosyl-L-methionine = N(2)-methylguanosine(1207) in 16S rRNA + S-adenosyl-L-homocysteine + H(+). In terms of biological role, specifically methylates the guanine in position 1207 of 16S rRNA in the 30S particle. This chain is Ribosomal RNA small subunit methyltransferase C, found in Klebsiella pneumoniae subsp. pneumoniae (strain ATCC 700721 / MGH 78578).